We begin with the raw amino-acid sequence, 917 residues long: Thiamine biosynthesis bifunctional protein ThiEC (917 aa).

Positions 1-243 (MSNEYPYASM…EGWKAVRGDK (243 aa)) are thiamine-phosphate synthase. 4-amino-2-methyl-5-(diphosphooxymethyl)pyrimidine contacts are provided by residues 48-52 (QLRAK) and Asp84. Asp85 and Asp109 together coordinate Mg(2+). Ser128 is a binding site for 4-amino-2-methyl-5-(diphosphooxymethyl)pyrimidine. 2-[(2R,5Z)-2-carboxy-4-methylthiazol-5(2H)-ylidene]ethyl phosphate is bound at residue 157–159 (STT). Position 160 (Lys160) interacts with 4-amino-2-methyl-5-(diphosphooxymethyl)pyrimidine. Residues Gly196 and 216-217 (VS) each bind 2-[(2R,5Z)-2-carboxy-4-methylthiazol-5(2H)-ylidene]ethyl phosphate. Residues 256 to 311 (PATDTQAAQEGAAKPGSEATEKKFTNAKDAKDAQKLAKQQRVDIAARGSKQRDKAH) form a disordered region. The interval 271–917 (GSEATEKKFT…GGKLYSTAQE (647 aa)) is phosphomethylpyrimidine synthase. Over residues 274–290 (ATEKKFTNAKDAKDAQK) the composition is skewed to basic and acidic residues. 5-amino-1-(5-phospho-beta-D-ribosyl)imidazole-binding positions include Asn487, Met516, Tyr545, His581, 601 to 603 (SRG), 642 to 645 (DGLR), and Glu681. His685 serves as a coordination point for Zn(2+). Tyr708 lines the 5-amino-1-(5-phospho-beta-D-ribosyl)imidazole pocket. His749 contacts Zn(2+). 3 residues coordinate [4Fe-4S] cluster: Cys829, Cys832, and Cys837.

It in the N-terminal section; belongs to the thiamine-phosphate synthase family. The protein in the C-terminal section; belongs to the ThiC family. The cofactor is [4Fe-4S] cluster.

It catalyses the reaction 2-[(2R,5Z)-2-carboxy-4-methylthiazol-5(2H)-ylidene]ethyl phosphate + 4-amino-2-methyl-5-(diphosphooxymethyl)pyrimidine + 2 H(+) = thiamine phosphate + CO2 + diphosphate. The catalysed reaction is 2-(2-carboxy-4-methylthiazol-5-yl)ethyl phosphate + 4-amino-2-methyl-5-(diphosphooxymethyl)pyrimidine + 2 H(+) = thiamine phosphate + CO2 + diphosphate. The enzyme catalyses 4-methyl-5-(2-phosphooxyethyl)-thiazole + 4-amino-2-methyl-5-(diphosphooxymethyl)pyrimidine + H(+) = thiamine phosphate + diphosphate. It carries out the reaction 5-amino-1-(5-phospho-beta-D-ribosyl)imidazole + S-adenosyl-L-methionine = 4-amino-2-methyl-5-(phosphooxymethyl)pyrimidine + CO + 5'-deoxyadenosine + formate + L-methionine + 3 H(+). It functions in the pathway cofactor biosynthesis; thiamine diphosphate biosynthesis; thiamine phosphate from 4-amino-2-methyl-5-diphosphomethylpyrimidine and 4-methyl-5-(2-phosphoethyl)-thiazole: step 1/1. In terms of biological role, condenses 4-methyl-5-(beta-hydroxyethyl)thiazole monophosphate (THZ-P) and 2-methyl-4-amino-5-hydroxymethyl pyrimidine pyrophosphate (HMP-PP) to form thiamine monophosphate (TMP). Catalyzes the synthesis of the hydroxymethylpyrimidine phosphate (HMP-P) moiety of thiamine from aminoimidazole ribotide (AIR) in a radical S-adenosyl-L-methionine (SAM)-dependent reaction. The protein is Thiamine biosynthesis bifunctional protein ThiEC (thiE/thiC) of Bifidobacterium longum (strain NCC 2705).